A 216-amino-acid chain; its full sequence is UPF0301 protein BBta_6966 (216 aa).

Belongs to the UPF0301 (AlgH) family.

This Bradyrhizobium sp. (strain BTAi1 / ATCC BAA-1182) protein is UPF0301 protein BBta_6966.